The chain runs to 906 residues: MVSFGGLARKIFGSSNDRRVKTLRQRAEQITALEKNYENLTDEQLQAKTAEFRAALAEGKSLDSLLPDAFATAREAAKRVLGMRPFDVQLIGGMVLHERGIAEMRTGEGKTLMATLPVYLNALEGKGVHVVTVNDYLATRDAETMGRLYNFLGLTVGVIKHGLDDDERRAAYACDITYGTNNELGFDYLRDNMKYERAQMVQRPHNYAIVDEVDSILIDEARTPLIISGPLEDRSDFYNLIDTFIPPLAEEDYEVDEKQKTAIFTEVGTEKVEKLLEAAGHLKGESLYDIENVAVVHHLNNALRAHKLFQRDKDYIVRNDEIVIIDEFTGRMMPGRRYSEGLHQALEAKEHVTIQPENQTLASITFQNYFRMYNKLSGMTGTAATEAEEFGNIYGLEVLEIPTNLPVQRIDEDDEVYRTVEEKYRAIVRDIRASHEKGQPILVGTTSIEKSEQLAERLRREGIKGFQVLNARYHEQEAYIIAQAGVPGAVTIATNMAGRGTDIQLGGNLEMRVRQELSDVPEGPEREEKIAAIKADIAQLKEKALAAGGLYVLATERHESRRIDNQLRGRSGRQGDPGRSKFFLSLQDDLMRIFGSDRMDGMLQKLGLKEDEAIVHPWINKALEKAQKKVEARNFEIRKNLLKYDDVMNDQRKVIFEQRLEMMDEEDLTETVAEMRHEVIEDMVILRIPKDAYAEKWDIAGLKQDIASKLNLDLPVEEWAKEEGIAEEEFENRIKEAADKAAAEKAERFGPQIMTYVEKSVIMQSLDNLWREHLVNLDHLRSVVGFRGYAQRDPLNEYKTEAFELFQTMLANLREVVISQLMRVEIVREAPPEPQLPPMAGLHIDGTTGENDFDEAIWAEHQHDDRIVPPAQRDPADPRTWGKVSRNEPCPCGSGKKYKHCHGAFE.

ATP is bound by residues Gln89, 107-111, and Asp502; that span reads GEGKT. Positions 868 to 887 are disordered; the sequence is VPPAQRDPADPRTWGKVSRN. Residues Cys890, Cys892, Cys901, and His902 each contribute to the Zn(2+) site.

This sequence belongs to the SecA family. In terms of assembly, monomer and homodimer. Part of the essential Sec protein translocation apparatus which comprises SecA, SecYEG and auxiliary proteins SecDF-YajC and YidC. It depends on Zn(2+) as a cofactor.

The protein resides in the cell inner membrane. Its subcellular location is the cytoplasm. It carries out the reaction ATP + H2O + cellular proteinSide 1 = ADP + phosphate + cellular proteinSide 2.. Functionally, part of the Sec protein translocase complex. Interacts with the SecYEG preprotein conducting channel. Has a central role in coupling the hydrolysis of ATP to the transfer of proteins into and across the cell membrane, serving both as a receptor for the preprotein-SecB complex and as an ATP-driven molecular motor driving the stepwise translocation of polypeptide chains across the membrane. This is Protein translocase subunit SecA from Brucella abortus (strain S19).